The primary structure comprises 422 residues: MTTIVGVRAREVLDSRGFPTVEAEVELEGGARGRAMVPSGASTGTHEALELRDGGKRYLGKGVRRAVENVNERIAPELVGMDALDQEGVDRAMLELDGTPNKANLGANAVLAVSLAVARAAAEALGLPLYRYLGGVQGVTLPVPLMNVINGGKHADNRVDFQEFMLVPAGAGSFAEALRIGAEVFHTLKAVLKEKGYSTNVGDEGGFAPDLRSNEEAVELLLLAIERAGYTPGQEVSLALDPATSELYRDGKYHLEGEGKVLSSEEMVAFWEAWVEKYPIRSIEDGLAEDDWEGWRLLTERLGGKVQLVGDDLFVTNPERLRAGIERGVANAILVKVNQIGTLSETLEAIRLAQRSGYRAVISHRSGETEDSFIADLAVAVNAGQIKTGSLSRSDRLAKYNQLLRIEEELGRAARFLGYAAF.

Glutamine 162 serves as a coordination point for (2R)-2-phosphoglycerate. The active-site Proton donor is glutamate 204. 3 residues coordinate Mg(2+): aspartate 241, glutamate 284, and aspartate 311. Residues lysine 336, arginine 365, serine 366, and lysine 387 each coordinate (2R)-2-phosphoglycerate. The active-site Proton acceptor is lysine 336.

Belongs to the enolase family. Requires Mg(2+) as cofactor.

Its subcellular location is the cytoplasm. The protein resides in the secreted. It is found in the cell surface. It carries out the reaction (2R)-2-phosphoglycerate = phosphoenolpyruvate + H2O. It participates in carbohydrate degradation; glycolysis; pyruvate from D-glyceraldehyde 3-phosphate: step 4/5. Catalyzes the reversible conversion of 2-phosphoglycerate (2-PG) into phosphoenolpyruvate (PEP). It is essential for the degradation of carbohydrates via glycolysis. This is Enolase from Thermus thermophilus (strain ATCC 27634 / DSM 579 / HB8).